We begin with the raw amino-acid sequence, 87 residues long: MANIKSAKKRAIQSEKARKIIASRRSMMRTFIKKVYAAIEAGDKAAAQKAFNEMQPIVDRQAAKGLIHKNKAARHKANLTAQINKLA.

It belongs to the bacterial ribosomal protein bS20 family.

Binds directly to 16S ribosomal RNA. This is Small ribosomal subunit protein bS20 from Shigella flexneri serotype 5b (strain 8401).